Reading from the N-terminus, the 487-residue chain is NADH-quinone oxidoreductase subunit N (487 aa).

Transmembrane regions (helical) follow at residues 18–38 (LVPELVLIGGAFALLMLDLFV), 44–64 (VWTHLFSVAVLAVVLVLLATG), 84–104 (VMKTVIVLVSGLSLVYGWTYL), 116–136 (VLVLFATAGMMLLASAGSLLM), 169–189 (FVLGSLASGLLLYGMSLVYGA), 211–231 (LLTGTIFMIAGVAFKLGAAPF), 242–262 (APAPIALFISSAPKLAAFGMA), 277–297 (WHLLIGGLSAVSLVVGNLMAI), 305–325 (MLAYSTVSHIGFLLMGVAGGG), 333–353 (MFYAVSYTIMSTASFGAIIAL), 377–397 (AGLVLCIMASLAGIPPFLGFW), 410–430 (DMLWLALVGVICAVIGAYYYL), and 457–477 (VLGVNALALLALGLAWSPIMV).

The protein belongs to the complex I subunit 2 family. NDH-1 is composed of 14 different subunits. Subunits NuoA, H, J, K, L, M, N constitute the membrane sector of the complex.

The protein localises to the cell inner membrane. It carries out the reaction a quinone + NADH + 5 H(+)(in) = a quinol + NAD(+) + 4 H(+)(out). Its function is as follows. NDH-1 shuttles electrons from NADH, via FMN and iron-sulfur (Fe-S) centers, to quinones in the respiratory chain. The immediate electron acceptor for the enzyme in this species is believed to be ubiquinone. Couples the redox reaction to proton translocation (for every two electrons transferred, four hydrogen ions are translocated across the cytoplasmic membrane), and thus conserves the redox energy in a proton gradient. The chain is NADH-quinone oxidoreductase subunit N from Xanthomonas euvesicatoria pv. vesicatoria (strain 85-10) (Xanthomonas campestris pv. vesicatoria).